Consider the following 195-residue polypeptide: Imidazoleglycerol-phosphate dehydratase (195 aa).

It belongs to the imidazoleglycerol-phosphate dehydratase family.

The protein localises to the cytoplasm. It carries out the reaction D-erythro-1-(imidazol-4-yl)glycerol 3-phosphate = 3-(imidazol-4-yl)-2-oxopropyl phosphate + H2O. It participates in amino-acid biosynthesis; L-histidine biosynthesis; L-histidine from 5-phospho-alpha-D-ribose 1-diphosphate: step 6/9. The protein is Imidazoleglycerol-phosphate dehydratase of Bacillus cytotoxicus (strain DSM 22905 / CIP 110041 / 391-98 / NVH 391-98).